The following is a 472-amino-acid chain: Ribulose bisphosphate carboxylase large chain (472 aa).

Positions 116 and 166 each coordinate substrate. Lys168 functions as the Proton acceptor in the catalytic mechanism. Lys170 serves as a coordination point for substrate. Residues Lys194, Asp196, and Glu197 each coordinate Mg(2+). Lys194 bears the N6-carboxylysine mark. The Proton acceptor role is filled by His287. Substrate-binding residues include Arg288, His320, and Ser372.

It belongs to the RuBisCO large chain family. Type I subfamily. Heterohexadecamer of 8 large chains and 8 small chains. Requires Mg(2+) as cofactor.

The catalysed reaction is 2 (2R)-3-phosphoglycerate + 2 H(+) = D-ribulose 1,5-bisphosphate + CO2 + H2O. It catalyses the reaction D-ribulose 1,5-bisphosphate + O2 = 2-phosphoglycolate + (2R)-3-phosphoglycerate + 2 H(+). Its function is as follows. RuBisCO catalyzes two reactions: the carboxylation of D-ribulose 1,5-bisphosphate, the primary event in carbon dioxide fixation, as well as the oxidative fragmentation of the pentose substrate. Both reactions occur simultaneously and in competition at the same active site. The chain is Ribulose bisphosphate carboxylase large chain from Nitrobacter vulgaris.